The primary structure comprises 505 residues: Putative thymidine phosphorylase (505 aa).

It belongs to the thymidine/pyrimidine-nucleoside phosphorylase family. Type 2 subfamily.

It catalyses the reaction thymidine + phosphate = 2-deoxy-alpha-D-ribose 1-phosphate + thymine. This Parvibaculum lavamentivorans (strain DS-1 / DSM 13023 / NCIMB 13966) protein is Putative thymidine phosphorylase.